A 1103-amino-acid chain; its full sequence is Ubiquitin carboxyl-terminal hydrolase 7 (1103 aa).

Over residues 1–11 (MNHQQQQQQQQ) the composition is skewed to low complexity. Disordered regions lie at residues 1 to 41 (MNHQ…TQNP) and 46 to 65 (NVTL…DDTS). Residues 1–209 (MNHQQQQQQQ…APHGVAWDSK (209 aa)) form an interaction with TSPYL5 region. At Ser-19 the chain carries Phosphoserine. A compositionally biased stretch (acidic residues) spans 20 to 32 (EPEDMEMEAGDTD). Residues Ser-50 and Ser-54 each carry the phosphoserine modification. The segment at 54-209 (SNAEEDMEDD…APHGVAWDSK (156 aa)) is interaction with p53/TP53 and MDM2. One can recognise an MATH domain in the interval 69–196 (EATFQFTVER…DDKVTFEVFV (128 aa)). Positions 71–206 (TFQFTVERFS…QADAPHGVAW (136 aa)) are necessary for nuclear localization. The USP domain occupies 215–522 (VGLKNQGATC…NAYMLVYIRE (308 aa)). Cys-224 acts as the Nucleophile in catalysis. His-465 (proton acceptor) is an active-site residue. Lys-870 is subject to N6-acetyllysine; alternate. Lys-870 is covalently cross-linked (Glycyl lysine isopeptide (Lys-Gly) (interchain with G-Cter in SUMO2); alternate). Lys-870 is covalently cross-linked (Glycyl lysine isopeptide (Lys-Gly) (interchain with G-Cter in ubiquitin); alternate). A Glycyl lysine isopeptide (Lys-Gly) (interchain with G-Cter in SUMO2) cross-link involves residue Lys-883. Ser-964 bears the Phosphoserine mark. N6-acetyllysine occurs at positions 1085 and 1097.

The protein belongs to the peptidase C19 family. Monomer. Homodimer. Part of a complex with DAXX, MDM2, RASSF1 and USP7. Part of a complex with DAXX, MDM2 and USP7. Interacts with MDM2; the interaction is independent of p53/TP53. Interacts with DAXX; the interaction is direct and independent of MDM2 and p53/TP53. Component of a complex composed of KMT2E, OGT and USP7; the complex stabilizes KMT2E, preventing KMT2E ubiquitination and proteasomal-mediated degradation. Interacts (via MATH domain) with KMT2E. Interacts with OGT. Interacts with FOXO4; the interaction is enhanced in presence of hydrogen peroxide and occurs independently of p53/TP53. Interacts with p53/TP53; the interaction is enhanced in response to DNA damage; the interaction is impaired by TSPYL5. Interacts with PTEN; the interaction is direct. Interacts with ATXN1 and the strength of interaction is influenced by the length of the poly-Gln region in ATXN1. A weaker interaction seen with mutants having longer poly-Gln regions. Interacts with KIAA1530/UVSSA. Interacts with MEX3C and antagonizes its ability to degrade mRNA. Interacts with DNMT1 and UHRF1. Interacts with FOXP3. Interacts (via MATH domain) with RNF220. Associated component of the Polycomb group (PcG) multiprotein PRC1-like complex. Interacts with EPOP. Interacts with OTUD4 and USP9X; the interaction is direct. Interacts with CRY2. Interacts with REST. Interacts with ERCC6. Part of a complex consisting of USP7, MAGEL2 and TRIM27; directly interacts with MAGEL2; directly interacts with TRIM27. In terms of processing, polyneddylated. Post-translationally, not sumoylated. Polyubiquitinated. Ubiquitinated at Lys-870. As to expression, widely expressed. High expression is detected in brain, bone marrow, thymus and testis.

The protein resides in the nucleus. It is found in the cytoplasm. It localises to the PML body. The protein localises to the chromosome. The enzyme catalyses Thiol-dependent hydrolysis of ester, thioester, amide, peptide and isopeptide bonds formed by the C-terminal Gly of ubiquitin (a 76-residue protein attached to proteins as an intracellular targeting signal).. Its function is as follows. Hydrolase that deubiquitinates target proteins such as ARMC5, FOXO4, DEPTOR, KAT5, p53/TP53, MDM2, ERCC6, DNMT1, UHRF1, PTEN, KMT2E/MLL5 and DAXX. Together with DAXX, prevents MDM2 self-ubiquitination and enhances the E3 ligase activity of MDM2 towards p53/TP53, thereby promoting p53/TP53 ubiquitination and proteasomal degradation. Deubiquitinates p53/TP53, preventing degradation of p53/TP53, and enhances p53/TP53-dependent transcription regulation, cell growth repression and apoptosis. Deubiquitinates p53/TP53 and MDM2 and strongly stabilizes p53/TP53 even in the presence of excess MDM2, and also induces p53/TP53-dependent cell growth repression and apoptosis. Deubiquitination of FOXO4 in presence of hydrogen peroxide is not dependent on p53/TP53 and inhibits FOXO4-induced transcriptional activity. In association with DAXX, is involved in the deubiquitination and translocation of PTEN from the nucleus to the cytoplasm, both processes that are counteracted by PML. Deubiquitinates KMT2E preventing KMT2E proteasomal-mediated degradation. Involved in cell proliferation during early embryonic development. Involved in transcription-coupled nucleotide excision repair (TC-NER) in response to UV damage: recruited to DNA damage sites following interaction with KIAA1530/UVSSA and promotes deubiquitination of ERCC6, preventing UV-induced degradation of ERCC6. Involved in maintenance of DNA methylation via its interaction with UHRF1 and DNMT1: acts by mediating deubiquitination of UHRF1 and DNMT1, preventing their degradation and promoting DNA methylation by DNMT1. Deubiquitinates alkylation repair enzyme ALKBH3. OTUD4 recruits USP7 and USP9X to stabilize ALKBH3, thereby promoting the repair of alkylated DNA lesions. Acts as a chromatin regulator via its association with the Polycomb group (PcG) multiprotein PRC1-like complex; may act by deubiquitinating components of the PRC1-like complex. Able to mediate deubiquitination of histone H2B; it is however unsure whether this activity takes place in vivo. Exhibits a preference towards 'Lys-48'-linked ubiquitin chains. Increases regulatory T-cells (Treg) suppressive capacity by deubiquitinating and stabilizing the transcription factor FOXP3 which is crucial for Treg cell function. Plays a role in the maintenance of the circadian clock periodicity via deubiquitination and stabilization of the CRY1 and CRY2 proteins. Deubiquitinates REST, thereby stabilizing REST and promoting the maintenance of neural progenitor cells. Deubiquitinates SIRT7, inhibiting SIRT7 histone deacetylase activity and regulating gluconeogenesis. Involved in the regulation of WASH-dependent actin polymerization at the surface of endosomes and the regulation of endosomal protein recycling. It maintains optimal WASH complex activity and precise F-actin levels via deubiquitination of TRIM27 and WASHC1. Mediates the deubiquitination of phosphorylated DEPTOR, promoting its stability and leading to decreased mTORC1 signaling. This Mus musculus (Mouse) protein is Ubiquitin carboxyl-terminal hydrolase 7 (Usp7).